An 87-amino-acid polypeptide reads, in one-letter code: Beta-defensin 109C (87 aa).

An N-terminal signal peptide occupies residues 1–22; the sequence is MRLHLLLLILLLFSILLSPVRG. Intrachain disulfides connect Cys-31-Cys-59, Cys-38-Cys-53, and Cys-43-Cys-60.

This sequence belongs to the beta-defensin family.

It is found in the secreted. In terms of biological role, has antibacterial activity. The sequence is that of Beta-defensin 109C (DEFB109C) from Homo sapiens (Human).